The sequence spans 639 residues: Versicolorin B synthase stcN (639 aa).

The signal sequence occupies residues 1–19 (MPAWSLLVLSALPVVGMFA). FAD is bound by residues 77-78 (TA) and 98-99 (EA). Residue N109 is glycosylated (N-linked (GlcNAc...) asparagine). An FAD-binding site is contributed by 164 to 167 (GAML). A glycan (N-linked (GlcNAc...) asparagine) is linked at N214. The region spanning 263–301 (GFSNGQLLGRSYITHTIHPKTRRRDTASTSYLQTALRTS) is the PAS domain. N-linked (GlcNAc...) asparagine glycosylation is found at N444 and N501. Residues A609 and 620-621 (PM) contribute to the FAD site.

This sequence belongs to the GMC oxidoreductase family. In terms of assembly, homodimer. FAD is required as a cofactor.

The protein resides in the cytoplasm. It localises to the cytosol. The enzyme catalyses (2S-3S)-versiconal hemiacetal = versicolorin B + H2O. It catalyses the reaction (S)-5'-oxoaverantin + H(+) = (1'S,5'S)-averufin + H2O. Its pathway is mycotoxin biosynthesis; sterigmatocystin biosynthesis. Norsolorinic acid reductase; part of the gene cluster that mediates the biosynthesis of sterigmatocystin (ST), a polyketide-derived furanocoumarin which is part of the most toxic and carcinogenic compounds among the known mycotoxins. The first step in the biosynthesis of sterigmatocystin is the production of hexanoate by the fatty acid synthase (FAS) units stcJ and stcK. The polyketide backbone is assembled by the non-reducing polyketide synthase stcA by condensation of the starter hexanoyl-CoA and 7 malonyl-CoA extender units followed by cyclization and release of norsolorinic acid. Norsolorinic acid is the first stable intermediate in the biosynthesis of sterigmatocystin and is converted into averantin (AVN) by the ketoreductase stcE which reduces the hexanoate ketone to an alcohol. Averantin is then oxidized into 5'-hydroxyaverantin (HAVN) by the cytochrome P450 monooxygenase stcF. 5'-hydroxyaverantin is further converted to 5'-oxyaverantin (OAVN) by the 5'-hydroxyaverantin dehydrogenase stcG. The next step is the conversion of OAVN into averufin (AVF) which is catalyzed by a yet to be identified enzyme. The cytochrome P450 monooxygenase stcB and the flavin-binding monooxygenase stcW are both required for the conversion of averufin to 1-hydroxyversicolorone. The esterase stcI probably catalyzes the formation of versiconal hemiacetal acetate from 1-hydroxyversicolorone. The oxydoreductase stcN then probably catalyzes the biosynthetic step from versiconal to versicolorin B (VERB). The next step is performed by the versicolorin B desaturase stcL to produce versicolorin A (VERA). The ketoreductase stcU and the cytochrome P450 monooxygenase stcS are involved in the conversion of versicolorin A to demethylsterigmatocystin. The Baeyer-Villiger oxidas stcQ and the reductase stcR might be involved in the biosynthetic step from versicolorin A to demethylsterigmatocystin. The final step in the biosynthesis of sterigmatocystin is the methylation of demethylsterigmatocystin catalyzed by the methyltransferase stcP. The sequence is that of Versicolorin B synthase stcN from Emericella nidulans (strain FGSC A4 / ATCC 38163 / CBS 112.46 / NRRL 194 / M139) (Aspergillus nidulans).